A 208-amino-acid chain; its full sequence is Large ribosomal subunit protein bL25 (208 aa).

This sequence belongs to the bacterial ribosomal protein bL25 family. CTC subfamily. In terms of assembly, part of the 50S ribosomal subunit; part of the 5S rRNA/L5/L18/L25 subcomplex. Contacts the 5S rRNA. Binds to the 5S rRNA independently of L5 and L18.

Functionally, this is one of the proteins that binds to the 5S RNA in the ribosome where it forms part of the central protuberance. The sequence is that of Large ribosomal subunit protein bL25 from Bartonella quintana (strain Toulouse) (Rochalimaea quintana).